A 313-amino-acid chain; its full sequence is tRNA dimethylallyltransferase (313 aa).

Position 11–18 (11–18 (GPTACGKT)) interacts with ATP. 13-18 (TACGKT) serves as a coordination point for substrate. 3 interaction with substrate tRNA regions span residues 36–39 (DSAL), 160–164 (QRIGR), and 243–248 (RCVGYR).

This sequence belongs to the IPP transferase family. As to quaternary structure, monomer. The cofactor is Mg(2+).

It carries out the reaction adenosine(37) in tRNA + dimethylallyl diphosphate = N(6)-dimethylallyladenosine(37) in tRNA + diphosphate. In terms of biological role, catalyzes the transfer of a dimethylallyl group onto the adenine at position 37 in tRNAs that read codons beginning with uridine, leading to the formation of N6-(dimethylallyl)adenosine (i(6)A). This is tRNA dimethylallyltransferase from Neisseria gonorrhoeae (strain NCCP11945).